We begin with the raw amino-acid sequence, 1003 residues long: Phosphatidylinositol 4,5-bisphosphate 5-phosphatase A (1003 aa).

Disordered stretches follow at residues 1 to 110 (MEGQ…AAKS) and 147 to 414 (AMPR…QPTC). Positions 6–11 (RSGSAR) match the RSXSXX motif 1 motif. A compositionally biased stretch (low complexity) spans 11–24 (RPGTRTGLGPLPGT). The residue at position 56 (arginine 56) is an Asymmetric dimethylarginine; alternate. Residue arginine 56 is modified to Omega-N-methylarginine; alternate. Omega-N-methylarginine is present on arginine 65. Arginine 76 is subject to Asymmetric dimethylarginine. At arginine 83 the chain carries Asymmetric dimethylarginine; alternate. Residue arginine 83 is modified to Omega-N-methylarginine; alternate. Residues 160–174 (LTPTSRDQKQLSPTS) show a composition bias toward polar residues. Serine 171 bears the Phosphoserine mark. Residues 180-196 (ALATSGLSLALASQEQP) show a composition bias toward low complexity. Positions 197–210 (PQSPSSPSPVPSPV) are enriched in pro residues. The segment covering 284-294 (ARPEAPRHSPE) has biased composition (basic and acidic residues). Phosphoserine occurs at positions 292 and 325. The span at 338–348 (VPPPLPKPPRS) shows a compositional bias: pro residues. Residues 346–351 (PRSPSR) carry the SH3-binding motif. 2 stretches are compositionally biased toward low complexity: residues 349 to 361 (PSRSPSRSPNRSP) and 390 to 413 (QAQESPAAATTTTSPTSSWSAQPT). Positions 351-356 (RSPSRS) match the RSXSXX motif 2 motif. Residues 422–725 (ITVVTWNVGT…SDHKPVAAQF (304 aa)) are catalytic. The segment at 726 to 837 (ILQFAFRDDV…IGVTEPFQIS (112 aa)) is required for ruffle localization. A disordered region spans residues 839–1003 (PTSESASSST…LGLEEGGLGP (165 aa)). Over residues 840-855 (TSESASSSTDSSGTSS) the composition is skewed to low complexity. Short sequence motifs (RSXSXX motif) lie at residues 871-876 (RSPSPG) and 882-887 (RSRSPG). Residue serine 900 is modified to Phosphoserine. 2 stretches are compositionally biased toward low complexity: residues 907 to 919 (SRSPSPQSRQLPR) and 927 to 943 (SSSSRGSSEEGPSGLPG). Positions 908 to 913 (RSPSPQ) match the RSXSXX motif 5 motif. Position 987 is a phosphoserine (serine 987).

It belongs to the inositol 1,4,5-trisphosphate 5-phosphatase type II family.

It is found in the cytoplasm. It carries out the reaction 1D-myo-inositol 1,4,5-trisphosphate + H2O = 1D-myo-inositol 1,4-bisphosphate + phosphate. The enzyme catalyses 1D-myo-inositol 1,3,4,5-tetrakisphosphate + H2O = 1D-myo-inositol 1,3,4-trisphosphate + phosphate. The catalysed reaction is a 1,2-diacyl-sn-glycero-3-phospho-(1D-myo-inositol-4,5-bisphosphate) + H2O = a 1,2-diacyl-sn-glycero-3-phospho-(1D-myo-inositol 4-phosphate) + phosphate. Inositol 5-phosphatase, which converts inositol 1,4,5-trisphosphate to inositol 1,4-bisphosphate. Also converts phosphatidylinositol 4,5-bisphosphate to phosphatidylinositol 4-phosphate and inositol 1,3,4,5-tetrakisphosphate to inositol 1,3,4-trisphosphate in vitro. May be involved in modulation of the function of inositol and phosphatidylinositol polyphosphate-binding proteins that are present at membranes ruffles. The sequence is that of Phosphatidylinositol 4,5-bisphosphate 5-phosphatase A (Inpp5j) from Mus musculus (Mouse).